Reading from the N-terminus, the 347-residue chain is Bombesin receptor-activated protein C6orf89 (347 aa).

Residues 1–58 (MDLAANEISIYDKLSETVDLVRQTGHQCGMSEKAIEKFIRQLLEKNEPQRPPPQYPLL) lie on the Cytoplasmic side of the membrane. Residues 59-79 (IVVYKVLATLGLILLTAYFVI) traverse the membrane as a helical segment. Residues 80 to 347 (QPFSPLAPEP…ICDGTAFSEL (268 aa)) are Extracellular-facing.

As to quaternary structure, homodimer. Interacts with BRS3. Interacts (via N-terminus) with SIN3B. Post-translationally, glycosylated.

It is found in the golgi apparatus membrane. The protein localises to the midbody. The protein resides in the cytoplasm. Its subcellular location is the nucleus. It localises to the nucleolus. In terms of biological role, exhibits histone deacetylase (HDAC) enhancer properties. May play a role in cell cycle progression and wound repair of bronchial epithelial cells. This is Bombesin receptor-activated protein C6orf89 (C6orf89) from Homo sapiens (Human).